Here is a 151-residue protein sequence, read N- to C-terminus: Ribosomal RNA large subunit methyltransferase H (151 aa).

Residues leucine 70, glycine 99, and 118 to 123 (LSKLTF) contribute to the S-adenosyl-L-methionine site.

Belongs to the RNA methyltransferase RlmH family. In terms of assembly, homodimer.

It is found in the cytoplasm. The enzyme catalyses pseudouridine(1915) in 23S rRNA + S-adenosyl-L-methionine = N(3)-methylpseudouridine(1915) in 23S rRNA + S-adenosyl-L-homocysteine + H(+). In terms of biological role, specifically methylates the pseudouridine at position 1915 (m3Psi1915) in 23S rRNA. This chain is Ribosomal RNA large subunit methyltransferase H, found in Gloeobacter violaceus (strain ATCC 29082 / PCC 7421).